We begin with the raw amino-acid sequence, 87 residues long: Defensin-A (87 aa).

An N-terminal signal peptide occupies residues 1 to 19 (MKFYLVLAFLTLCAVAVTA). The propeptide occupies 20–44 (LPAGDETRIDLETLEEDLRLVDGAQ). 3 disulfide bridges follow: C57/C78, C64/C83, and C68/C85.

Hemolymph and fat body.

The protein localises to the secreted. Its function is as follows. Antibacterial peptide mostly active against Gram-positive and Gram negative bacteria. The sequence is that of Defensin-A from Glossina morsitans morsitans (Savannah tsetse fly).